Here is a 504-residue protein sequence, read N- to C-terminus: Pup--protein ligase (504 aa).

Glu30 is a binding site for Mg(2+). Arg74 serves as a coordination point for ATP. Tyr76 lines the Mg(2+) pocket. Residue Asp78 is the Proton acceptor of the active site. A Mg(2+)-binding site is contributed by Glu84. The ATP site is built by Thr87 and Trp459.

This sequence belongs to the Pup ligase/Pup deamidase family. Pup-conjugating enzyme subfamily.

The enzyme catalyses ATP + [prokaryotic ubiquitin-like protein]-L-glutamate + [protein]-L-lysine = ADP + phosphate + N(6)-([prokaryotic ubiquitin-like protein]-gamma-L-glutamyl)-[protein]-L-lysine.. It functions in the pathway protein degradation; proteasomal Pup-dependent pathway. It participates in protein modification; protein pupylation. Catalyzes the covalent attachment of the prokaryotic ubiquitin-like protein modifier Pup to the proteasomal substrate proteins, thereby targeting them for proteasomal degradation. This tagging system is termed pupylation. The ligation reaction involves the side-chain carboxylate of the C-terminal glutamate of Pup and the side-chain amino group of a substrate lysine. The sequence is that of Pup--protein ligase from Corynebacterium urealyticum (strain ATCC 43042 / DSM 7109).